The following is a 240-amino-acid chain: Keratinocyte-associated protein 3 (240 aa).

Helical transmembrane passes span 21 to 41, 63 to 83, 95 to 115, and 163 to 183; these read VGLALILVGHVNLLVGAVLHG, VISVGSGLLSVSVGLVALLAS, LLTLALVNLLLSAACSMGLLL, and ALALWIPSLFMSAAEAALSGY.

The protein belongs to the TMEM54 family.

The protein resides in the membrane. This chain is Keratinocyte-associated protein 3 (Krtcap3), found in Mus musculus (Mouse).